The chain runs to 540 residues: Cytosolic carboxypeptidase 6 (540 aa).

Residues 167 to 438 form the Peptidase M14 domain; that stretch reads YPYTYTRFQH…NVARTFLDYY (272 aa). Positions 230, 233, and 328 each coordinate Zn(2+). Catalysis depends on E401, which acts as the Proton donor/acceptor.

This sequence belongs to the peptidase M14 family. As to quaternary structure, interacts with MYLK. Zn(2+) is required as a cofactor. In terms of tissue distribution, widely expressed. Expressed abundantly in testis, pituitary and brain and to a lower extent in eye, stomach, adrenal and kidney. In brain, expressed at low level in cerebellum as compared to cortex.

The protein localises to the cytoplasm. It is found in the cytosol. It localises to the cytoskeleton. Its subcellular location is the microtubule organizing center. The protein resides in the centrosome. The protein localises to the centriole. It is found in the golgi apparatus. It localises to the cilium basal body. It catalyses the reaction (L-glutamyl)(n+1)-gamma-L-glutamyl-L-glutamyl-[protein] + H2O = (L-glutamyl)(n)-gamma-L-glutamyl-L-glutamyl-[protein] + L-glutamate. It carries out the reaction C-terminal L-alpha-aminoacyl-L-glutamyl-L-glutamyl-[tubulin] + H2O = C-terminal L-alpha-aminoacyl-L-glutamyl-[tubulin] + L-glutamate. Functionally, metallocarboxypeptidase that mediates protein deglutamylation of tubulin and non-tubulin target proteins. Catalyzes the removal of polyglutamate side chains present on the gamma-carboxyl group of glutamate residues within the C-terminal tail of tubulin protein. Specifically cleaves tubulin long-side-chains, while it is not able to remove the branching point glutamate. Also catalyzes the removal of polyglutamate residues from the carboxy-terminus of non-tubulin proteins such as MYLK. Mediates the deglutamylation of nucleotidyltransferase CGAS, leading to CGAS antiviral defense response activation. Involved in KLF4 deglutamylation which promotes KLF4 proteasome-mediated degradation, thereby negatively regulating cell pluripotency maintenance and embryogenesis. This Mus musculus (Mouse) protein is Cytosolic carboxypeptidase 6.